The following is a 101-amino-acid chain: Large ribosomal subunit protein uL24 (101 aa).

This sequence belongs to the universal ribosomal protein uL24 family. In terms of assembly, part of the 50S ribosomal subunit.

In terms of biological role, one of two assembly initiator proteins, it binds directly to the 5'-end of the 23S rRNA, where it nucleates assembly of the 50S subunit. Functionally, one of the proteins that surrounds the polypeptide exit tunnel on the outside of the subunit. The polypeptide is Large ribosomal subunit protein uL24 (Paracoccus denitrificans (strain Pd 1222)).